The primary structure comprises 349 residues: GTP 3',8-cyclase (349 aa).

The region spanning 24–249 (PFGRAITYLR…VDSDYQTGGP (226 aa)) is the Radical SAM core domain. R33 contributes to the GTP binding site. Residues C40 and C44 each coordinate [4Fe-4S] cluster. Y46 contacts S-adenosyl-L-methionine. C47 lines the [4Fe-4S] cluster pocket. A GTP-binding site is contributed by R82. An S-adenosyl-L-methionine-binding site is contributed by G86. T116 lines the GTP pocket. Residue S140 participates in S-adenosyl-L-methionine binding. A GTP-binding site is contributed by K176. Residue M210 coordinates S-adenosyl-L-methionine. [4Fe-4S] cluster is bound by residues C273 and C276. A GTP-binding site is contributed by 278 to 280 (RVR). Position 290 (C290) interacts with [4Fe-4S] cluster.

Belongs to the radical SAM superfamily. MoaA family. As to quaternary structure, monomer and homodimer. [4Fe-4S] cluster is required as a cofactor.

The enzyme catalyses GTP + AH2 + S-adenosyl-L-methionine = (8S)-3',8-cyclo-7,8-dihydroguanosine 5'-triphosphate + 5'-deoxyadenosine + L-methionine + A + H(+). Its pathway is cofactor biosynthesis; molybdopterin biosynthesis. Catalyzes the cyclization of GTP to (8S)-3',8-cyclo-7,8-dihydroguanosine 5'-triphosphate. The sequence is that of GTP 3',8-cyclase from Agrobacterium fabrum (strain C58 / ATCC 33970) (Agrobacterium tumefaciens (strain C58)).